A 267-amino-acid polypeptide reads, in one-letter code: Undecaprenyl-diphosphatase (267 aa).

8 helical membrane passes run 1–21, 39–59, 83–103, 111–131, 149–169, 189–209, 218–238, and 246–266; these read MTYF…FLPI, QGLA…VIYF, SNLA…GLLF, LRSA…LWWV, ALFL…RSGI, FLMS…KLAM, LLST…HFFL, and MMPF…WLAL.

This sequence belongs to the UppP family.

It is found in the cell inner membrane. The catalysed reaction is di-trans,octa-cis-undecaprenyl diphosphate + H2O = di-trans,octa-cis-undecaprenyl phosphate + phosphate + H(+). Functionally, catalyzes the dephosphorylation of undecaprenyl diphosphate (UPP). Confers resistance to bacitracin. The chain is Undecaprenyl-diphosphatase from Aliivibrio fischeri (strain MJ11) (Vibrio fischeri).